Consider the following 169-residue polypeptide: Nucleoside diphosphate kinase 3 (169 aa).

ADP contacts are provided by lysine 29, arginine 105, threonine 111, arginine 122, valine 129, and asparagine 132. The active-site Pros-phosphohistidine intermediate is the histidine 135.

This sequence belongs to the NDK family. As to quaternary structure, homohexamer. Interacts (via its N-terminal region) with KAT5; this interaction enables recruitment of NME3 at DNA damage sites where it plays a role in the repair of DNA. Found in association with several ciliary nephronophthisis proteins, including NEK8, CEP164, ANKS6. Mg(2+) serves as cofactor.

It is found in the mitochondrion outer membrane. It localises to the cytoplasm. Its subcellular location is the cytoskeleton. The protein localises to the cilium basal body. It catalyses the reaction a 2'-deoxyribonucleoside 5'-diphosphate + ATP = a 2'-deoxyribonucleoside 5'-triphosphate + ADP. The catalysed reaction is a ribonucleoside 5'-diphosphate + ATP = a ribonucleoside 5'-triphosphate + ADP. Catalyzes the phosphorylation of ribonucleosides and deoxyribonucleoside diphosphates, other than ATP, into the corresponding triphosphates with ATP as the major phosphate donor. The ATP gamma phosphate is transferred to the nucleoside diphosphate beta phosphate via a ping-pong mechanism, using a phosphorylated active-site intermediate. Through the catalyzed exchange of gamma-phosphate between di- and triphosphonucleosides participates in regulation of intracellular nucleotide homeostasis. Inhibits granulocyte differentiation. May be required for ciliary function during renal development. Functionally, independently of its kinase activity, facilitates mitochondrial tethering prior to membrane fusion through its direct membrane-binding and hexamerization. Implicated in repair of both single- and double-stranded breaks in DNA through its association with the ribonucleotide reductase complex (RNR complex) via its interaction with the histone acetyltransferase KAT5, this interaction enables recruitment of NME3 at DNA damage sites where it plays a role in the repair of DNA, independently of its kinase activity. This chain is Nucleoside diphosphate kinase 3 (Nme3), found in Mus musculus (Mouse).